The following is a 382-amino-acid chain: Phenylalanine dehydrogenase (382 aa).

R54 contributes to the NAD(+) binding site. K78 contributes to the L-phenylalanine binding site. Catalysis depends on K90, which acts as the Proton donor/acceptor. Residues D125, S156, T160, 190-196 (GLGKVGY), 213-214 (DI), 253-254 (AF), and 274-276 (SAN) each bind NAD(+). N276 is an L-phenylalanine binding site.

This sequence belongs to the Glu/Leu/Phe/Val dehydrogenases family.

It carries out the reaction L-phenylalanine + NAD(+) + H2O = 3-phenylpyruvate + NH4(+) + NADH + H(+). With respect to regulation, activity is not affected by the metal chelating agent EDTA. Addition of 1 mM Mg(2+) results in 15% increase in activity, while the enzyme is strongly inhibited by 1 mM Fe(3+), Fe(2+), Cu(2+), Zn(2+) and Ag(+). Functionally, catalyzes the reversible NAD(+)-dependent oxidative deamination of L-phenylalanine to phenylpyruvate. Can also catalyze the oxidative deamination of several other amino acids, with much lower efficiency. Shows activity towards various bulky aromatic alpha-keto acids/esters and (S)-amine alcohols. Can catalyze the amination of 3-(2-chlorophenyl)-2-oxopropionic acid (CPOA) to produce 2-chloro-L-phenylalanine (2-Cl-Phe), a chemical compound used in the pharmaceutical and biotechnology industries. Shows a preference for amination over deamination. In Bacillus thermotolerans (Quasibacillus thermotolerans), this protein is Phenylalanine dehydrogenase.